Here is a 430-residue protein sequence, read N- to C-terminus: Small ribosomal subunit protein uS5m (430 aa).

Residues 108 to 128 (AGARKGRGKRTKRKRRKDLNR) are disordered. The segment covering 111-125 (RKGRGKRTKRKRRKD) has biased composition (basic residues). Positions 218–282 (FDTRILEVRN…NRAVHYLHYI (65 aa)) constitute an S5 DRBM domain.

It belongs to the universal ribosomal protein uS5 family. In terms of assembly, component of the mitochondrial ribosome small subunit (28S) which comprises a 12S rRNA and about 30 distinct proteins.

The protein localises to the mitochondrion. The chain is Small ribosomal subunit protein uS5m (MRPS5) from Bos taurus (Bovine).